Here is a 44-residue protein sequence, read N- to C-terminus: Photosystem I reaction center subunit IX (44 aa).

The chain crosses the membrane as a helical span at residues 9–29 (YMRSAPVVAAAWITMTAGIII).

It belongs to the PsaJ family.

Its subcellular location is the cellular thylakoid membrane. Its function is as follows. May help in the organization of the PsaE and PsaF subunits. The polypeptide is Photosystem I reaction center subunit IX (Prochlorococcus marinus (strain MIT 9312)).